The following is a 321-amino-acid chain: Glucokinase (321 aa).

9 to 14 (ADIGGT) contacts ATP.

Belongs to the bacterial glucokinase family.

The protein resides in the cytoplasm. The catalysed reaction is D-glucose + ATP = D-glucose 6-phosphate + ADP + H(+). The polypeptide is Glucokinase (Saccharophagus degradans (strain 2-40 / ATCC 43961 / DSM 17024)).